Reading from the N-terminus, the 181-residue chain is MGIPVGKSLLMLFTFLAFASCCIAAYRPSETLCGGELVDTLQFVCGDRGFYFSRPASRINRRSRGIVEECCFRSCDLALLETYCATPAKSERDVSTPPTVLPDDSPRYPVVKLFQYNAWKQSTQRLRRGLPALLRTRRGRMLVKELEAFREAQRHRPLIALPTEDPTPHGAAFVEVSSDLQ.

The signal sequence occupies residues 1-24 (MGIPVGKSLLMLFTFLAFASCCIA). The b stretch occupies residues 25 to 52 (AYRPSETLCGGELVDTLQFVCGDRGFYF). Cystine bridges form between Cys-33/Cys-71, Cys-45/Cys-84, and Cys-70/Cys-75. A c region spans residues 53–64 (SRPASRINRRSR). Residues 65-85 (GIVEECCFRSCDLALLETYCA) form an a region. The interval 86 to 91 (TPAKSE) is d. Positions 92–181 (RDVSTPPTVL…AFVEVSSDLQ (90 aa)) are cleaved as a propeptide — e peptide. Thr-163 carries O-linked (GalNAc...) threonine glycosylation.

This sequence belongs to the insulin family. As to quaternary structure, interacts with MYORG; this interaction is required for IGF2 secretion. Interacts with integrins ITGAV:ITGB3 and ITGA6:ITGB4; integrin-binding is required for IGF2 signaling. Interacts with IGFBP2. In terms of processing, proteolytically processed by PCSK4, proIGF2 is cleaved at Arg-128 and Arg-92 to generate big-IGF2 and mature IGF2.

It is found in the secreted. Its function is as follows. The insulin-like growth factors possess growth-promoting activity. Major fetal growth hormone in mammals. Plays a key role in regulating fetoplacental development. IGF2 is influenced by placental lactogen. Also involved in tissue differentiation. In adults, involved in glucose metabolism in adipose tissue, skeletal muscle and liver. Acts as a ligand for integrin which is required for IGF2 signaling. Positively regulates myogenic transcription factor MYOD1 function by facilitating the recruitment of transcriptional coactivators, thereby controlling muscle terminal differentiation. Inhibits myoblast differentiation and modulates metabolism via increasing the mitochondrial respiration rate. Preptin undergoes glucose-mediated co-secretion with insulin, and acts as a physiological amplifier of glucose-mediated insulin secretion. Exhibits osteogenic properties by increasing osteoblast mitogenic activity through phosphoactivation of MAPK1 and MAPK3. The protein is Insulin-like growth factor 2 of Equus caballus (Horse).